The sequence spans 952 residues: Glycine dehydrogenase (decarboxylating) (952 aa).

K703 carries the post-translational modification N6-(pyridoxal phosphate)lysine.

It belongs to the GcvP family. In terms of assembly, the glycine cleavage system is composed of four proteins: P, T, L and H. Requires pyridoxal 5'-phosphate as cofactor.

The catalysed reaction is N(6)-[(R)-lipoyl]-L-lysyl-[glycine-cleavage complex H protein] + glycine + H(+) = N(6)-[(R)-S(8)-aminomethyldihydrolipoyl]-L-lysyl-[glycine-cleavage complex H protein] + CO2. Its function is as follows. The glycine cleavage system catalyzes the degradation of glycine. The P protein binds the alpha-amino group of glycine through its pyridoxal phosphate cofactor; CO(2) is released and the remaining methylamine moiety is then transferred to the lipoamide cofactor of the H protein. The sequence is that of Glycine dehydrogenase (decarboxylating) from Mycolicibacterium gilvum (strain PYR-GCK) (Mycobacterium gilvum (strain PYR-GCK)).